A 226-amino-acid polypeptide reads, in one-letter code: Teichuronic acid biosynthesis protein TuaF (226 aa).

2 helical membrane passes run 15–35 and 202–222; these read NIIWIIAVPIILGAAGYILPS and VLGVMIGLTIAFMFVVIPEFF.

Its subcellular location is the cell membrane. Its pathway is cell wall biogenesis; teichuronic acid biosynthesis. The chain is Teichuronic acid biosynthesis protein TuaF (tuaF) from Bacillus subtilis (strain 168).